The primary structure comprises 226 residues: Ribonuclease 3 (226 aa).

The RNase III domain occupies 5-127 (IFQRGDPIGH…IVAAIYLDCG (123 aa)). E40 is a Mg(2+) binding site. The active site involves D44. D113 and E116 together coordinate Mg(2+). E116 is an active-site residue. The 71-residue stretch at 154–224 (DPKTRLQEWL…ATLVIAQLDS (71 aa)) folds into the DRBM domain.

This sequence belongs to the ribonuclease III family. As to quaternary structure, homodimer. Mg(2+) serves as cofactor.

It localises to the cytoplasm. It catalyses the reaction Endonucleolytic cleavage to 5'-phosphomonoester.. Functionally, digests double-stranded RNA. Involved in the processing of primary rRNA transcript to yield the immediate precursors to the large and small rRNAs (23S and 16S). Processes some mRNAs, and tRNAs when they are encoded in the rRNA operon. Processes pre-crRNA and tracrRNA of type II CRISPR loci if present in the organism. This Xanthomonas oryzae pv. oryzae (strain KACC10331 / KXO85) protein is Ribonuclease 3.